A 161-amino-acid polypeptide reads, in one-letter code: RNA pyrophosphohydrolase (161 aa).

Positions 12 to 154 (PYRPGVGMMI…KRKLYQAVVK (143 aa)) constitute a Nudix hydrolase domain. The Nudix box motif lies at 46–67 (GGIVPGETPSIAAMREMLEEIG).

It belongs to the Nudix hydrolase family. RppH subfamily. A divalent metal cation serves as cofactor.

In terms of biological role, accelerates the degradation of transcripts by removing pyrophosphate from the 5'-end of triphosphorylated RNA, leading to a more labile monophosphorylated state that can stimulate subsequent ribonuclease cleavage. This is RNA pyrophosphohydrolase from Rickettsia peacockii (strain Rustic).